Here is a 182-residue protein sequence, read N- to C-terminus: UPF0149 protein CGSHiEE_07975 (182 aa).

It belongs to the UPF0149 family.

This is UPF0149 protein CGSHiEE_07975 from Haemophilus influenzae (strain PittEE).